Here is a 446-residue protein sequence, read N- to C-terminus: Histidine--tRNA ligase (446 aa).

The protein belongs to the class-II aminoacyl-tRNA synthetase family. In terms of assembly, homodimer.

The protein resides in the cytoplasm. It catalyses the reaction tRNA(His) + L-histidine + ATP = L-histidyl-tRNA(His) + AMP + diphosphate + H(+). The sequence is that of Histidine--tRNA ligase from Burkholderia lata (strain ATCC 17760 / DSM 23089 / LMG 22485 / NCIMB 9086 / R18194 / 383).